Here is a 161-residue protein sequence, read N- to C-terminus: Dermonecrotic toxin LarSicTox-alphaI-1 (161 aa).

The protein belongs to the arthropod phospholipase D family. Class II subfamily. Mg(2+) serves as cofactor. In terms of processing, contains 2 disulfide bonds. In terms of tissue distribution, expressed by the venom gland.

Its subcellular location is the secreted. It catalyses the reaction an N-(acyl)-sphingosylphosphocholine = an N-(acyl)-sphingosyl-1,3-cyclic phosphate + choline. It carries out the reaction an N-(acyl)-sphingosylphosphoethanolamine = an N-(acyl)-sphingosyl-1,3-cyclic phosphate + ethanolamine. The enzyme catalyses a 1-acyl-sn-glycero-3-phosphocholine = a 1-acyl-sn-glycero-2,3-cyclic phosphate + choline. The catalysed reaction is a 1-acyl-sn-glycero-3-phosphoethanolamine = a 1-acyl-sn-glycero-2,3-cyclic phosphate + ethanolamine. Functionally, dermonecrotic toxins cleave the phosphodiester linkage between the phosphate and headgroup of certain phospholipids (sphingolipid and lysolipid substrates), forming an alcohol (often choline) and a cyclic phosphate. This toxin acts on sphingomyelin (SM). It may also act on ceramide phosphoethanolamine (CPE), lysophosphatidylcholine (LPC) and lysophosphatidylethanolamine (LPE), but not on lysophosphatidylserine (LPS), and lysophosphatidylglycerol (LPG). It acts by transphosphatidylation, releasing exclusively cyclic phosphate products as second products. Induces dermonecrosis, hemolysis, increased vascular permeability, edema, inflammatory response, and platelet aggregation. This chain is Dermonecrotic toxin LarSicTox-alphaI-1, found in Loxosceles arizonica (Arizona brown spider).